The primary structure comprises 239 residues: MSNNKDVAIKSSGGKKIREARIKVRSDSLYNLTTAVEKLKSASYVKFDPTLEIVMKLGIDPRHSDQMVRGVVNLPAGTGKTVRVAVICKEEREEEAKVAGADLVGSTNIIDEIKAGKINFDVCIATPDMMAVIGSVARILGPKGLMPNPKLGTVTLDIKGAVKNAKSGQVEYRAEKAGIIHAGLGKLSFPDQDLLKNLKAFIDAVVKAKPTGVKGSYLKAIYLSSTMGASVQIDLASIA.

It belongs to the universal ribosomal protein uL1 family. As to quaternary structure, part of the 50S ribosomal subunit.

Functionally, binds directly to 23S rRNA. The L1 stalk is quite mobile in the ribosome, and is involved in E site tRNA release. Its function is as follows. Protein L1 is also a translational repressor protein, it controls the translation of the L11 operon by binding to its mRNA. This is Large ribosomal subunit protein uL1 from Rickettsia bellii (strain OSU 85-389).